Reading from the N-terminus, the 347-residue chain is UDP-3-O-acylglucosamine N-acyltransferase (347 aa).

H241 (proton acceptor) is an active-site residue.

Belongs to the transferase hexapeptide repeat family. LpxD subfamily. As to quaternary structure, homotrimer.

The catalysed reaction is a UDP-3-O-[(3R)-3-hydroxyacyl]-alpha-D-glucosamine + a (3R)-hydroxyacyl-[ACP] = a UDP-2-N,3-O-bis[(3R)-3-hydroxyacyl]-alpha-D-glucosamine + holo-[ACP] + H(+). Its pathway is bacterial outer membrane biogenesis; LPS lipid A biosynthesis. Functionally, catalyzes the N-acylation of UDP-3-O-acylglucosamine using 3-hydroxyacyl-ACP as the acyl donor. Is involved in the biosynthesis of lipid A, a phosphorylated glycolipid that anchors the lipopolysaccharide to the outer membrane of the cell. In Neisseria gonorrhoeae (strain NCCP11945), this protein is UDP-3-O-acylglucosamine N-acyltransferase.